Reading from the N-terminus, the 240-residue chain is E3 ubiquitin-protein ligase LubX (240 aa).

2 U-box domains span residues 30–103 (TTPT…QTNY) and 125–198 (EIPD…RKRE).

In terms of processing, ubiquitinated in the presence of host E1 ubiquitin-activating enzyme, E2 ubiquitin-conjugating enzyme and ubiquitin.

It localises to the secreted. The protein resides in the host cell. The catalysed reaction is S-ubiquitinyl-[E2 ubiquitin-conjugating enzyme]-L-cysteine + [acceptor protein]-L-lysine = [E2 ubiquitin-conjugating enzyme]-L-cysteine + N(6)-ubiquitinyl-[acceptor protein]-L-lysine.. In terms of biological role, effector proteins function to alter host cell physiology and promote bacterial survival in host tissues. This protein is an E3 ubiquitin ligase that interferes with host's ubiquitination pathway. The protein is E3 ubiquitin-protein ligase LubX (lubX) of Legionella pneumophila (strain Paris).